The chain runs to 330 residues: DNA-directed RNA polymerase subunit alpha (330 aa).

The interval 1-232 is alpha N-terminal domain (alpha-NTD); it reads MAILAFQKPD…YHFMLFSDEK (232 aa). Residues 248-330 are alpha C-terminal domain (alpha-CTD); sequence EEVLHMRQLL…DISKYKLDKE (83 aa).

It belongs to the RNA polymerase alpha chain family. As to quaternary structure, homodimer. The RNAP catalytic core consists of 2 alpha, 1 beta, 1 beta' and 1 omega subunit. When a sigma factor is associated with the core the holoenzyme is formed, which can initiate transcription.

It catalyses the reaction RNA(n) + a ribonucleoside 5'-triphosphate = RNA(n+1) + diphosphate. Its function is as follows. DNA-dependent RNA polymerase catalyzes the transcription of DNA into RNA using the four ribonucleoside triphosphates as substrates. This chain is DNA-directed RNA polymerase subunit alpha, found in Bacteroides thetaiotaomicron (strain ATCC 29148 / DSM 2079 / JCM 5827 / CCUG 10774 / NCTC 10582 / VPI-5482 / E50).